Reading from the N-terminus, the 241-residue chain is tRNA (guanine-N(7)-)-methyltransferase (241 aa).

Residues 1–10 are compositionally biased toward polar residues; that stretch reads MTESNDTPIQ. The segment at 1–20 is disordered; sequence MTESNDTPIQTEEGDERQHR. Residues Glu71, Glu96, Asp123, and Asp146 each coordinate S-adenosyl-L-methionine. Asp146 is a catalytic residue. Residues Lys150, Asp182, and 219–222 contribute to the substrate site; that span reads TKFE.

Belongs to the class I-like SAM-binding methyltransferase superfamily. TrmB family.

It carries out the reaction guanosine(46) in tRNA + S-adenosyl-L-methionine = N(7)-methylguanosine(46) in tRNA + S-adenosyl-L-homocysteine. It functions in the pathway tRNA modification; N(7)-methylguanine-tRNA biosynthesis. In terms of biological role, catalyzes the formation of N(7)-methylguanine at position 46 (m7G46) in tRNA. The protein is tRNA (guanine-N(7)-)-methyltransferase of Pseudomonas fluorescens (strain Pf0-1).